A 1406-amino-acid polypeptide reads, in one-letter code: MKDLLKFLKAQTKTEEFDAIKIALASPDMIRSWSFGEVKKPETINYRTFKPERDGLFCARIFGPVKDYECLCGKYKRLKHRGVICEKCGVEVTQTKVRRERMGHIELASPTAHIWFLKSLPSRIGLLLDMPLRDIERVLYFESYVVIEGGMTNLERRQILTEEQYLDALEEFGDEFDAKMGAEAIQALLKNMDLEAECEILREELNETNSETKRKKLTKRIKLLEAFVQSGNKPEWMILTVLPVLPPDLRPLVPLDGGRFATSDLNDLYRRVINRNNRLKRLLDLAAPDIIVRNEKRMLQEAVDALLDNGRRGRAITGSNKRPLKSLADMIKGKQGRFRQNLLGKRVDYSGRSVITVGPYLRLHQCGLPKKMALELFKPFIYGKLELRGLATTIKAAKKMVEREEAVVWDILDEVIREHPVLLNRAPTLHRLGIQAFEPVLIEGKAIQLHPLVCAAYNADFDGDQMAVHVPLTLEAQLEARALMMSTNNILSPANGEPIIVPSQDVVLGLYYMTRDCVNAKGEGMVLTGPKEAERIYRAGLASLHARVKVRITEEIRNTEGESITRTSIIDTTVGRAILWMIVPQGLPYSIVNQPLGKKAISKMLNTCYRILGLKPTVIFADQIMYTGFAYAARSGASVGIDDMVIPEAKAGIIEEAETEVAEIQEQFQSGLVTAGERYNKVIDIWAAANERVAKAMMDNLSVEDVVNRDGVVEQQVSFNSIFMMADSGARGSAAQIRQLAGMRGLMAKPDGSIIETPITANFREGLNVLQYFISTHGARKGLADTALKTANSGYLTRRLVDVAQDLVVTEDDCGTHNGIVMTPVIEGGDVKEPLRDRVLGRVTAEEVIKPGSADILVPRNTLLDEKWCDLLEENSVDSVKVRSVVSCETDFGVCANCYGRDLARGHIINKGEAVGVIAAQSIGEPGTQLTMRTFHIGGAASRAAAESSIQVKNKGSLKLSNVKFVTNAAGKLVITSRNTELKLIDEFGRTKESYKVPYGAVMAKGDGAEVQGGETVANWDPHIMPVVTEVSGFIRFADMVDGQTITRQTDELTGLSSLVVLDSAERTGSGKDLRPALKIVDAKGNDVLIPGTDMPAQYFLPGKAIVQLEDGIQIGAGDTLARIPQESSGTKDITGGLPRVADLFEARRPKEPAILAEISGIISFGKETKGKRRLVISPLDGSDAYEEMIPKWRQLNVFEGEVVERGDVVSDGPESPHDILRLRGVHAVTRYITNEVQEVYRLQGVKINDKHIEVIVRQMLRKGTIVDAGSTDFLEGEQAEMSRVKIANRKLAAEGKIEATFTRDLLGITKASLATESFISAASFQETTRVLTEAAVAGKRDELRGLKENVIVGRLIPAGTGYAYHQDRMRRKAQGEAPVVPQVSADEATANLAELLNAGFGNNKG.

Zn(2+) is bound by residues Cys-70, Cys-72, Cys-85, and Cys-88. 3 residues coordinate Mg(2+): Asp-460, Asp-462, and Asp-464. Residues Cys-814, Cys-888, Cys-895, and Cys-898 each contribute to the Zn(2+) site.

Belongs to the RNA polymerase beta' chain family. The RNAP catalytic core consists of 2 alpha, 1 beta, 1 beta' and 1 omega subunit. When a sigma factor is associated with the core the holoenzyme is formed, which can initiate transcription. It depends on Mg(2+) as a cofactor. Requires Zn(2+) as cofactor.

It catalyses the reaction RNA(n) + a ribonucleoside 5'-triphosphate = RNA(n+1) + diphosphate. In terms of biological role, DNA-dependent RNA polymerase catalyzes the transcription of DNA into RNA using the four ribonucleoside triphosphates as substrates. The polypeptide is DNA-directed RNA polymerase subunit beta' (Yersinia pseudotuberculosis serotype O:1b (strain IP 31758)).